Consider the following 759-residue polypeptide: uncharacterized protein (759 aa).

Disordered stretches follow at residues 269–328 and 406–759; these read SQRV…GEEP and LPLR…AQTA. Positions 289 to 299 are enriched in basic and acidic residues; sequence AGGKEEAERGG. Low complexity predominate over residues 406–415; sequence LPLRPPSGSG. The span at 417–430 shows a compositional bias: basic and acidic residues; that stretch reads AARKPGYEKEEGRG. Over residues 431–444 the composition is skewed to low complexity; the sequence is RATTASATAATSPR. Basic and acidic residues-rich tracts occupy residues 469–518 and 525–545; these read PESE…RGEH and DSGR…EKGT. Pro residues predominate over residues 585–599; that stretch reads WVPPPHLLFPSPLPS. Positions 659 to 680 are enriched in low complexity; it reads SLSSLSSSSSSSSSSSPSYSPS. Residues 681–690 show a composition bias toward pro residues; it reads PLSPPSPVSP. Low complexity-rich tracts occupy residues 691 to 704 and 728 to 746; these read SSPR…IRSP and PPFS…PSAP.

This is an uncharacterized protein from Human herpesvirus 6B (strain Z29) (HHV-6 variant B).